The chain runs to 358 residues: Phospho-N-acetylmuramoyl-pentapeptide-transferase (358 aa).

The next 10 helical transmembrane spans lie at 27–47 (LFNNFIFIGVFILFFFLSLFA), 81–101 (MGGVFLMIPFFILLLIITINL), 106–126 (LFLLLLTIFGFYITGFLDDYL), 147–167 (VISIIFILLAYEKNLINPLVI), 171–191 (SWVINMNIFILPISFLVLVGI), 201–221 (LDGLAAGCSGIVFYGLGTEIL), 228–248 (LFVFSILCFSMSGLCLGFLKY), 255–275 (IFMGDTGSLSIGATLGTIALL), 278–298 (SVFTLSIFSGIFIIESLSVII), and 336–356 (IVENFWKINILLIILGIVLKI).

The protein belongs to the glycosyltransferase 4 family. MraY subfamily. The cofactor is Mg(2+).

The protein localises to the cell inner membrane. It catalyses the reaction UDP-N-acetyl-alpha-D-muramoyl-L-alanyl-gamma-D-glutamyl-meso-2,6-diaminopimeloyl-D-alanyl-D-alanine + di-trans,octa-cis-undecaprenyl phosphate = di-trans,octa-cis-undecaprenyl diphospho-N-acetyl-alpha-D-muramoyl-L-alanyl-D-glutamyl-meso-2,6-diaminopimeloyl-D-alanyl-D-alanine + UMP. It participates in cell wall biogenesis; peptidoglycan biosynthesis. Functionally, catalyzes the initial step of the lipid cycle reactions in the biosynthesis of the cell wall peptidoglycan: transfers peptidoglycan precursor phospho-MurNAc-pentapeptide from UDP-MurNAc-pentapeptide onto the lipid carrier undecaprenyl phosphate, yielding undecaprenyl-pyrophosphoryl-MurNAc-pentapeptide, known as lipid I. In Prochlorococcus marinus (strain MIT 9215), this protein is Phospho-N-acetylmuramoyl-pentapeptide-transferase.